We begin with the raw amino-acid sequence, 281 residues long: Release factor glutamine methyltransferase (281 aa).

Residues 121-125, Asp144, and Asn188 each bind S-adenosyl-L-methionine; that span reads GSGTG. 188-191 lines the substrate pocket; sequence NPPY.

The protein belongs to the protein N5-glutamine methyltransferase family. PrmC subfamily.

It catalyses the reaction L-glutaminyl-[peptide chain release factor] + S-adenosyl-L-methionine = N(5)-methyl-L-glutaminyl-[peptide chain release factor] + S-adenosyl-L-homocysteine + H(+). Its function is as follows. Methylates the class 1 translation termination release factors RF1/PrfA and RF2/PrfB on the glutamine residue of the universally conserved GGQ motif. This Aquifex aeolicus (strain VF5) protein is Release factor glutamine methyltransferase.